The following is a 270-amino-acid chain: Acyl-[acyl-carrier-protein]--UDP-N-acetylglucosamine O-acyltransferase (270 aa).

Residues 69–72, His121, His140, and Gln157 contribute to the substrate site; that span reads QDLK.

This sequence belongs to the transferase hexapeptide repeat family. LpxA subfamily. As to quaternary structure, homotrimer.

The protein resides in the cytoplasm. The enzyme catalyses a (3R)-hydroxyacyl-[ACP] + UDP-N-acetyl-alpha-D-glucosamine = a UDP-3-O-[(3R)-3-hydroxyacyl]-N-acetyl-alpha-D-glucosamine + holo-[ACP]. The protein operates within glycolipid biosynthesis; lipid IV(A) biosynthesis; lipid IV(A) from (3R)-3-hydroxytetradecanoyl-[acyl-carrier-protein] and UDP-N-acetyl-alpha-D-glucosamine: step 1/6. Functionally, involved in the biosynthesis of lipid A, a phosphorylated glycolipid that anchors the lipopolysaccharide to the outer membrane of the cell. The chain is Acyl-[acyl-carrier-protein]--UDP-N-acetylglucosamine O-acyltransferase from Helicobacter pylori (strain ATCC 700392 / 26695) (Campylobacter pylori).